A 473-amino-acid chain; its full sequence is Uronate isomerase (473 aa).

This sequence belongs to the metallo-dependent hydrolases superfamily. Uronate isomerase family.

It carries out the reaction D-glucuronate = D-fructuronate. It catalyses the reaction aldehydo-D-galacturonate = keto-D-tagaturonate. Its pathway is carbohydrate metabolism; pentose and glucuronate interconversion. The protein is Uronate isomerase (uxaC) of Bacillus subtilis (strain 168).